The following is an 853-amino-acid chain: MAAPAEAEVAAAPGLTEAAEAAELTRALSRLLPGLETESKLGRRRALEALEQVLEEAVRPGADSAAFQGPWARLLLPRLLRLLSDPAEGCRALAAHLLDLGLRRAARPRDALPRLLPALSARLARPELARPPPEPCEELRLALVQLLHLAVDLGGAALAPHLDDAVRALRAALLDPFAAVRREGCECAAALARATPEHFHMQSESLIGPLMQTISHQHWKVRVAVIEATGTVIQFGSGNSVDDVLSHFAQRLFDDVPQVRQAVTSVVGGWLLNLRDRYSFLHKLTPLLLSSFSDEMPEIRQTATSLWEKVGLQWQQENEADLKDKLDFASPPPPNYPEHESRPGLGCRELVFRNLSKVLPAICHDITDWVVGTRVKAAQLLPVLLLHAEDHITQHLEIVLRTLHQACTDEEKAVVGSCIRAAELIGTFVSPEVFLKLILAMLKKAPSASGLLILASVIRGCPRNALQPHVTVIATELAQEHICQGSENNLYLEHLLLCVQALLSVCQEDCRAASLQFLEVLVTIMAVSDAVGLEKKAQKTMDTLAEVEDIPSSQDLYRKHVGALLERLTASHGEWAVHSVQLLKFTVLLTQAGPAVGEALQHVIPTLRACLQPSTDPHMRLKLFSILSMMLLRPKDTVDSQGQFRGYLDMVINDILAPNLQWHAGRTAAAIRTAAISCLWALISSDILSAKQVQEAQETLMPQVLATLEDDSQTTRLMSCRIINMFLKNSGDTMEPEKFLKVYPELLKRLDDVSNDVRMAAASALLTWLKCIESLDGKSAYQSSVQFLYRELLVHLDDPESAIQDTVLEVLKEGSVLFPDVLVRETEAVVHKHRSATYCEQLLQHMQTMAAAR.

Alanine 2 bears the N-acetylalanine mark. 9 HEAT repeats span residues 69–107, 200–238, 240–276, 278–316, 374–412, 597–636, 694–732, 736–774, and 782–820; these read GPWA…RAAR, HMQS…FGSG, SVDD…NLRD, YSFL…QWQQ, RVKA…DEEK, GEAL…RPKD, QEAQ…NSGD, PEKF…CIES, and QSSV…LFPD.

It belongs to the DNAAF5 family. Interacts with DNAI2; probably involved in outer arm dynein assembly. As to expression, expressed in ciliated cells including ependymal cells lining the lateral ventricles and multiciliated epithelium of oviduct ampulla.

The protein resides in the cytoplasm. Its subcellular location is the cytoplasmic granule. In terms of biological role, cytoplasmic protein involved in the delivery of the dynein machinery to the motile cilium. It is required for the assembly of the axonemal dynein inner and outer arms, two structures attached to the peripheral outer doublet A microtubule of the axoneme, that play a crucial role in cilium motility. The chain is Dynein axonemal assembly factor 5 from Mus musculus (Mouse).